Consider the following 518-residue polypeptide: Glutamate--cysteine ligase (518 aa).

It belongs to the glutamate--cysteine ligase type 1 family. Type 1 subfamily.

It catalyses the reaction L-cysteine + L-glutamate + ATP = gamma-L-glutamyl-L-cysteine + ADP + phosphate + H(+). Its pathway is sulfur metabolism; glutathione biosynthesis; glutathione from L-cysteine and L-glutamate: step 1/2. This is Glutamate--cysteine ligase from Klebsiella pneumoniae (strain 342).